The chain runs to 162 residues: Phenazine biosynthesis protein PhzA1 (162 aa).

The protein belongs to the PhzA/PhzB family.

It functions in the pathway antibiotic biosynthesis; phenazine biosynthesis. Functionally, involved in the biosynthesis of the antibiotic phenazine, a nitrogen-containing heterocyclic molecule. PhzA1 (operon phzA1B1C1E1F1G1) has a role in the biosynthesis of the phenazine during planktonic growth. The protein is Phenazine biosynthesis protein PhzA1 of Pseudomonas aeruginosa (strain ATCC 15692 / DSM 22644 / CIP 104116 / JCM 14847 / LMG 12228 / 1C / PRS 101 / PAO1).